The sequence spans 148 residues: ATP synthase epsilon chain (148 aa).

This sequence belongs to the ATPase epsilon chain family. F-type ATPases have 2 components, CF(1) - the catalytic core - and CF(0) - the membrane proton channel. CF(1) has five subunits: alpha(3), beta(3), gamma(1), delta(1), epsilon(1). CF(0) has three main subunits: a, b and c.

It is found in the cell membrane. Functionally, produces ATP from ADP in the presence of a proton gradient across the membrane. This is ATP synthase epsilon chain from Streptococcus thermophilus (strain ATCC BAA-491 / LMD-9).